We begin with the raw amino-acid sequence, 181 residues long: ATP-dependent protease subunit HslV (181 aa).

Thr-7 is an active-site residue. Na(+)-binding residues include Ala-165, Cys-168, and Thr-171.

It belongs to the peptidase T1B family. HslV subfamily. As to quaternary structure, a double ring-shaped homohexamer of HslV is capped on each side by a ring-shaped HslU homohexamer. The assembly of the HslU/HslV complex is dependent on binding of ATP.

The protein resides in the cytoplasm. It carries out the reaction ATP-dependent cleavage of peptide bonds with broad specificity.. With respect to regulation, allosterically activated by HslU binding. In terms of biological role, protease subunit of a proteasome-like degradation complex believed to be a general protein degrading machinery. The chain is ATP-dependent protease subunit HslV from Lysinibacillus sphaericus (strain C3-41).